The chain runs to 160 residues: Phosphopantetheine adenylyltransferase (160 aa).

Threonine 9 lines the substrate pocket. Residues 9 to 10 (TF) and histidine 17 contribute to the ATP site. Substrate-binding residues include lysine 41, leucine 73, and arginine 87. ATP is bound by residues 88-90 (GLR), glutamate 98, and 123-129 (YSFLSSS).

It belongs to the bacterial CoaD family. As to quaternary structure, homohexamer. The cofactor is Mg(2+).

The protein resides in the cytoplasm. The enzyme catalyses (R)-4'-phosphopantetheine + ATP + H(+) = 3'-dephospho-CoA + diphosphate. Its pathway is cofactor biosynthesis; coenzyme A biosynthesis; CoA from (R)-pantothenate: step 4/5. Functionally, reversibly transfers an adenylyl group from ATP to 4'-phosphopantetheine, yielding dephospho-CoA (dPCoA) and pyrophosphate. In Moorella thermoacetica (strain ATCC 39073 / JCM 9320), this protein is Phosphopantetheine adenylyltransferase.